Reading from the N-terminus, the 492-residue chain is ATP synthase subunit beta, chloroplastic (492 aa).

An ATP-binding site is contributed by 170–177 (GGAGVGKT).

The protein belongs to the ATPase alpha/beta chains family. In terms of assembly, F-type ATPases have 2 components, CF(1) - the catalytic core - and CF(0) - the membrane proton channel. CF(1) has five subunits: alpha(3), beta(3), gamma(1), delta(1), epsilon(1). CF(0) has four main subunits: a(1), b(1), b'(1) and c(9-12).

The protein localises to the plastid. Its subcellular location is the chloroplast thylakoid membrane. The enzyme catalyses ATP + H2O + 4 H(+)(in) = ADP + phosphate + 5 H(+)(out). In terms of biological role, produces ATP from ADP in the presence of a proton gradient across the membrane. The catalytic sites are hosted primarily by the beta subunits. This chain is ATP synthase subunit beta, chloroplastic, found in Angiopteris evecta (Mule's foot fern).